Reading from the N-terminus, the 330-residue chain is Malate dehydrogenase (330 aa).

Position 11–17 (11–17 (GGAGQIA)) interacts with NAD(+). Substrate contacts are provided by Arg92 and Arg98. NAD(+)-binding positions include Asn105, Gln112, and 129-131 (VGN). The substrate site is built by Asn131 and Arg162. The active-site Proton acceptor is the His187.

Belongs to the LDH/MDH superfamily. MDH type 2 family.

It carries out the reaction (S)-malate + NAD(+) = oxaloacetate + NADH + H(+). In terms of biological role, catalyzes the reversible oxidation of malate to oxaloacetate. This is Malate dehydrogenase from Protochlamydia amoebophila (strain UWE25).